The chain runs to 468 residues: Putative amidase AmiC (468 aa).

Active-site charge relay system residues include Lys-80 and Ser-155. The active-site Acyl-ester intermediate is Ser-179.

Belongs to the amidase family.

It catalyses the reaction a monocarboxylic acid amide + H2O = a monocarboxylate + NH4(+). The sequence is that of Putative amidase AmiC (amiC) from Mycobacterium leprae (strain TN).